We begin with the raw amino-acid sequence, 434 residues long: (3,5-dihydroxyphenyl)acetyl-CoA 1,2-dioxygenase (434 aa).

Residues aspartate 184, glutamate 190, 223–226 (HPRY), 234–239 (AGINLK), glycine 293, 322–324 (IPG), and glutamine 413 each bind substrate.

The protein belongs to the enoyl-CoA hydratase/isomerase family. Homohexamer; dimer of trimers.

The catalysed reaction is (3,5-dihydroxyphenyl)acetyl-CoA + O2 = 2-(3,5-dihydroxyphenyl)-2-oxoacetate + CoA + H(+). Functionally, involved in the biosynthesis of the nonproteinogenic amino acid monomer (S)-3,5-dihydroxyphenylglycine (Dpg) responsible of the production of vancomycin and teicoplanin antibiotics. Catalyzes the unusual conversion 3,5-dihydroxyphenylacetyl-CoA (DPA-CoA) to 3,5-dihydroxyphenylglyoxylate. DpgC performed a net four-electron oxidation of the benzylic carbon of DPA-CoA and the hydrolysis of the thioester bond to generate free CoA. It can also use phenylacetyl-CoA (PA-CoA) as substrate. This chain is (3,5-dihydroxyphenyl)acetyl-CoA 1,2-dioxygenase (dpgC), found in Amycolatopsis orientalis (Nocardia orientalis).